The chain runs to 620 residues: Delta(14)-sterol reductase LBR (620 aa).

The Tudor domain occupies 1-62 (MPGRKFADGE…DIKPLKSFKQ (62 aa)). Over 1 to 215 (MPGRKFADGE…TPQRRDLEFG (215 aa)) the chain is Nuclear. A disordered region spans residues 52–111 (SDIKPLKSFKQRKSGSTSSSPSRRRSSRSRSRSRSRSPGRAPKGSRRSVSASYQADAKEK). K55 is subject to N6-acetyllysine. 2 positions are modified to phosphoserine: S59 and S67. A phosphoserine; by CDK1 mark is found at S71 and S86. Over residues 73–88 (SRRRSSRSRSRSRSRS) the composition is skewed to basic residues. Residue S88 is modified to Phosphoserine. O-linked (GlcNAc) serine glycosylation occurs at S96. Residues S99 and S101 each carry the phosphoserine modification. T123 is subject to Phosphothreonine. Position 133 is a phosphoserine (S133). Position 205 is a phosphothreonine (T205). The next 8 membrane-spanning stretches (helical) occupy residues 216–236 (GVPG…LLLL), 263–283 (VCGV…LPVG), 304–324 (LYAF…DIEL), 331–351 (FLQF…YLYA), 452–472 (IIHD…VPFT), 486–506 (DLSW…YVIF), 525–547 (LAHL…WWGF), and 566–586 (PCGF…ALLI). An N6-acetyllysine mark is found at K599 and K606.

This sequence belongs to the ERG4/ERG24 family. Interacts with CBX5. Interacts with DNA. Interaction with DNA is sequence independent with higher affinity for supercoiled and relaxed circular DNA than linear DNA. Interacts with lamin B. Interacts with CLNK. Interacts with TMEM147; promoting LBR localization to the nucleus inner membrane. Post-translationally, phosphorylated by CDK1 in mitosis when the inner nuclear membrane breaks down into vesicles that dissociate from the lamina and the chromatin. It is phosphorylated by different protein kinases in interphase when the membrane is associated with these structures. Phosphorylation of LBR and HP1 proteins may be responsible for some of the alterations in chromatin organization and nuclear structure which occur at various times during the cell cycle. Phosphorylated by SRPK1. In late anaphase LBR is dephosphorylated, probably by PP1 and/or PP2A, allowing reassociation with chromatin.

It localises to the nucleus inner membrane. The protein localises to the nucleus. It is found in the cytoplasm. The protein resides in the endoplasmic reticulum membrane. It catalyses the reaction 5alpha-cholest-8,14-dien-3beta-ol + NADPH + H(+) = 5alpha-cholest-8-en-3beta-ol + NADP(+). The enzyme catalyses 4,4-dimethyl-5alpha-cholesta-8,24-dien-3beta-ol + NADP(+) = 4,4-dimethyl-5alpha-cholesta-8,14,24-trien-3beta-ol + NADPH + H(+). The catalysed reaction is 4,4-dimethyl-8,14-cholestadien-3beta-ol + NADPH + H(+) = 4,4-dimethyl-5alpha-cholest-8-en-3beta-ol + NADP(+). The protein operates within steroid biosynthesis; cholesterol biosynthesis. Catalyzes the reduction of the C14-unsaturated bond of lanosterol, as part of the metabolic pathway leading to cholesterol biosynthesis. Plays a critical role in myeloid cell cholesterol biosynthesis which is essential to both myeloid cell growth and functional maturation. Mediates the activation of NADPH oxidases, perhaps by maintaining critical levels of cholesterol required for membrane lipid raft formation during neutrophil differentiation. Anchors the lamina and the heterochromatin to the inner nuclear membrane. The chain is Delta(14)-sterol reductase LBR (Lbr) from Rattus norvegicus (Rat).